A 445-amino-acid chain; its full sequence is Trigger factor (445 aa).

Positions 162-247 (GDQVTIDAIG…IKAVHTAEPT (86 aa)) constitute a PPIase FKBP-type domain.

The protein belongs to the FKBP-type PPIase family. Tig subfamily.

Its subcellular location is the cytoplasm. It carries out the reaction [protein]-peptidylproline (omega=180) = [protein]-peptidylproline (omega=0). In terms of biological role, involved in protein export. Acts as a chaperone by maintaining the newly synthesized protein in an open conformation. Functions as a peptidyl-prolyl cis-trans isomerase. In Rickettsia conorii (strain ATCC VR-613 / Malish 7), this protein is Trigger factor.